The chain runs to 165 residues: Nucleotide-binding protein P9515_05441 (165 aa).

Belongs to the YajQ family.

Its function is as follows. Nucleotide-binding protein. The chain is Nucleotide-binding protein P9515_05441 from Prochlorococcus marinus (strain MIT 9515).